The primary structure comprises 764 residues: uncharacterized protein (764 aa).

Over 1–646 the chain is Lumenal; it reads MKEENGFAGF…LTKLYTFPFT (646 aa). The interval 22–173 is disordered; the sequence is LNDTAPTKSQ…SAITAPSRKV (152 aa). A glycan (N-linked (GlcNAc...) asparagine) is linked at Asn-23. Composition is skewed to polar residues over residues 25–41 and 61–82; these read TAPT…NNEG and SEAS…QSPS. Position 80 is a phosphoserine (Ser-80). Positions 98–113 are enriched in acidic residues; it reads ENQENEADEAENEETS. An N-linked (GlcNAc...) asparagine glycan is attached at Asn-118. Residues 118 to 145 are compositionally biased toward basic and acidic residues; the sequence is NHTENTEEIAEESRPLERTHSGSNHHEA. Positions 158 to 173 are enriched in polar residues; the sequence is NTLSQGSAITAPSRKV. A GRAM domain is found at 197 to 264; sequence RDFHRIFKVL…TEIVSVEKKS (68 aa). 2 N-linked (GlcNAc...) asparagine glycosylation sites follow: Asn-240 and Asn-330. A disordered region spans residues 320-406; sequence ASGNHHSGSS…DGNSVKKMNE (87 aa). Residues 321–330 are compositionally biased toward low complexity; that stretch reads SGNHHSGSSN. Residues 331 to 340 show a composition bias toward polar residues; sequence QSINADSSAG. The span at 352 to 371 shows a compositional bias: acidic residues; the sequence is ANDESSEDDDEDNNTDEANE. N-linked (GlcNAc...) asparagine glycans are attached at residues Asn-364 and Asn-376. Residues 389-399 are compositionally biased toward polar residues; sequence HSDNVVLSDGN. The 167-residue stretch at 432 to 598 folds into the VASt domain; that stretch reads LAHVLCSDVV…AFENYKVSPK (167 aa). Residues Asn-442 and Asn-554 are each glycosylated (N-linked (GlcNAc...) asparagine). The span at 598–613 shows a compositional bias: basic residues; it reads KGRRKKITKHTKKKNK. A disordered region spans residues 598-626; sequence KGRRKKITKHTKKKNKHASETSVAPEKVD. Asn-627 carries N-linked (GlcNAc...) asparagine glycosylation. A helical membrane pass occupies residues 647–667; the sequence is IITWLMHPTHLLLVVMFSMLV. Topologically, residues 668–764 are cytoplasmic; that stretch reads LQWWYMQQIL…LRKLEASGYI (97 aa).

This sequence belongs to the YSP2 family.

It is found in the membrane. This is an uncharacterized protein from Schizosaccharomyces pombe (strain 972 / ATCC 24843) (Fission yeast).